A 746-amino-acid chain; its full sequence is Lysine-specific histone demethylase 1 homolog 2 (746 aa).

Residues 1-26 (MNSPASDETAPRRNRRKVSRKNYDEN) form a disordered region. Residues 51–152 (EKETETEALI…FGVSPLFAPY (102 aa)) enclose the SWIRM domain. FAD-binding residues include Glu-189, Arg-191, Arg-197, and Glu-569.

This sequence belongs to the flavin monoamine oxidase family. Requires FAD as cofactor. As to expression, expressed in the shoot and root apical regions of young seedlings. Expressed in inflorescences.

Probable histone demethylase that reduces the levels of histone H3 'Lys-4' methylation in chromatin of the floral repressor FLOWERING LOCUS C (FLC) and the sporophytically silenced floral repressor FWA. Seems to act in partial redundancy with FLOWERING LOCUS D (FLD) to repress FLC expression. Required for cytosine methylation of FWA. Controls primary seed dormancy by regulating DOG1 and abscisic acid signaling-related genes. The sequence is that of Lysine-specific histone demethylase 1 homolog 2 from Arabidopsis thaliana (Mouse-ear cress).